Consider the following 324-residue polypeptide: Putative ribose-phosphate pyrophosphokinase 2 (324 aa).

Residues 43–45 and 102–103 each bind ATP; these read DGE and RQ. Histidine 136 serves as a coordination point for Mg(2+). Residues aspartate 225 and 229 to 233 contribute to the D-ribose 5-phosphate site; that span reads NTGKT.

This sequence belongs to the ribose-phosphate pyrophosphokinase family. Class I subfamily. As to quaternary structure, homohexamer. Mg(2+) is required as a cofactor.

The protein resides in the cytoplasm. It carries out the reaction D-ribose 5-phosphate + ATP = 5-phospho-alpha-D-ribose 1-diphosphate + AMP + H(+). Its pathway is metabolic intermediate biosynthesis; 5-phospho-alpha-D-ribose 1-diphosphate biosynthesis; 5-phospho-alpha-D-ribose 1-diphosphate from D-ribose 5-phosphate (route I): step 1/1. In terms of biological role, involved in the biosynthesis of the central metabolite phospho-alpha-D-ribosyl-1-pyrophosphate (PRPP) via the transfer of pyrophosphoryl group from ATP to 1-hydroxyl of ribose-5-phosphate (Rib-5-P). The polypeptide is Putative ribose-phosphate pyrophosphokinase 2 (Streptococcus agalactiae serotype III (strain NEM316)).